A 204-amino-acid chain; its full sequence is Holliday junction branch migration complex subunit RuvA (204 aa).

The segment at 1–63 (MIASLRGTVI…EDAMKLYGFI (63 aa)) is domain I. The segment at 64–142 (DDQSREMFAL…AYTVGVVDDG (79 aa)) is domain II. The flexible linker stretch occupies residues 143 to 151 (APTAPTQGV). The tract at residues 152-204 (APVVVVDQVTQALTGLGFTEKQADDAVAAVLSADPGLDTSAALRAALAKLGGK) is domain III.

This sequence belongs to the RuvA family. As to quaternary structure, homotetramer. Forms an RuvA(8)-RuvB(12)-Holliday junction (HJ) complex. HJ DNA is sandwiched between 2 RuvA tetramers; dsDNA enters through RuvA and exits via RuvB. An RuvB hexamer assembles on each DNA strand where it exits the tetramer. Each RuvB hexamer is contacted by two RuvA subunits (via domain III) on 2 adjacent RuvB subunits; this complex drives branch migration. In the full resolvosome a probable DNA-RuvA(4)-RuvB(12)-RuvC(2) complex forms which resolves the HJ.

The protein localises to the cytoplasm. Its function is as follows. The RuvA-RuvB-RuvC complex processes Holliday junction (HJ) DNA during genetic recombination and DNA repair, while the RuvA-RuvB complex plays an important role in the rescue of blocked DNA replication forks via replication fork reversal (RFR). RuvA specifically binds to HJ cruciform DNA, conferring on it an open structure. The RuvB hexamer acts as an ATP-dependent pump, pulling dsDNA into and through the RuvAB complex. HJ branch migration allows RuvC to scan DNA until it finds its consensus sequence, where it cleaves and resolves the cruciform DNA. The chain is Holliday junction branch migration complex subunit RuvA from Corynebacterium efficiens (strain DSM 44549 / YS-314 / AJ 12310 / JCM 11189 / NBRC 100395).